Consider the following 271-residue polypeptide: Neurexophilin-1 (271 aa).

Positions 1 to 21 (MQAACWYVLLLLQPTVYLVTC) are cleaved as a signal peptide. The tract at residues 22–97 (ANLTNGGKSE…WDWLRNSTDL (76 aa)) is II. Asparagine 23, asparagine 68, asparagine 93, asparagine 146, asparagine 156, and asparagine 162 each carry an N-linked (GlcNAc...) asparagine glycan. Residues 98–176 (QEPRPRAKRR…LVPPTKIVEF (79 aa)) form an III region. The segment at 177–185 (DLAQQTVID) is IV (linker domain). The tract at residues 186–271 (AKDSKSFNCR…HSDTPYFPSG (86 aa)) is v (Cys-rich).

This sequence belongs to the neurexophilin family. Post-translationally, may be proteolytically processed at the boundary between the N-terminal non-conserved and the central conserved domain in neuron-like cells. In terms of tissue distribution, brain, only in a scattered subpopulation of neurons that probably represent inhibitory interneurons.

Its subcellular location is the secreted. May be signaling molecules that resemble neuropeptides. Ligand for alpha-neurexins. The protein is Neurexophilin-1 (Nxph1) of Mus musculus (Mouse).